We begin with the raw amino-acid sequence, 501 residues long: Lysine--tRNA ligase (501 aa).

Mg(2+) is bound by residues Glu-411 and Glu-418.

It belongs to the class-II aminoacyl-tRNA synthetase family. Homodimer. The cofactor is Mg(2+).

Its subcellular location is the cytoplasm. It catalyses the reaction tRNA(Lys) + L-lysine + ATP = L-lysyl-tRNA(Lys) + AMP + diphosphate. This is Lysine--tRNA ligase from Clostridium perfringens (strain ATCC 13124 / DSM 756 / JCM 1290 / NCIMB 6125 / NCTC 8237 / Type A).